Consider the following 368-residue polypeptide: Endoglucanase (368 aa).

Positions 1–21 (MNVLRSGIVTMLLLAAFSVQA) are cleaved as a signal peptide. Glutamate 55 serves as the catalytic Proton donor. Aspartate 116 functions as the Nucleophile in the catalytic mechanism.

The protein belongs to the glycosyl hydrolase 8 (cellulase D) family.

The protein resides in the secreted. It carries out the reaction Endohydrolysis of (1-&gt;4)-beta-D-glucosidic linkages in cellulose, lichenin and cereal beta-D-glucans.. It participates in glycan metabolism; bacterial cellulose biosynthesis. Its function is as follows. Hydrolyzes carboxymethylcellulose. This is Endoglucanase (bcsZ) from Escherichia coli (strain K12).